A 313-amino-acid polypeptide reads, in one-letter code: CRISPR-associated endonuclease Cas1 1 (313 aa).

Glu-144, His-211, and Asp-224 together coordinate Mn(2+). Residues 288-313 (PPLDAPEAVDPVIPPEEPSGDDGHRG) are disordered.

It belongs to the CRISPR-associated endonuclease Cas1 family. As to quaternary structure, homodimer, forms a heterotetramer with a Cas2 homodimer. Mg(2+) is required as a cofactor. It depends on Mn(2+) as a cofactor.

Its function is as follows. CRISPR (clustered regularly interspaced short palindromic repeat), is an adaptive immune system that provides protection against mobile genetic elements (viruses, transposable elements and conjugative plasmids). CRISPR clusters contain spacers, sequences complementary to antecedent mobile elements, and target invading nucleic acids. CRISPR clusters are transcribed and processed into CRISPR RNA (crRNA). Acts as a dsDNA endonuclease. Involved in the integration of spacer DNA into the CRISPR cassette. This Rhodospirillum rubrum (strain ATCC 11170 / ATH 1.1.1 / DSM 467 / LMG 4362 / NCIMB 8255 / S1) protein is CRISPR-associated endonuclease Cas1 1.